Reading from the N-terminus, the 773-residue chain is Mitogen-activated protein kinase kinase kinase 9 (773 aa).

Basic and acidic residues predominate over residues 1–14 (MKKSSDKSPVRQHD). A disordered region spans residues 1–35 (MKKSSDKSPVRQHDTATQINSDAVSSSTSFTDSDS). A compositionally biased stretch (low complexity) spans 21 to 35 (SDAVSSSTSFTDSDS). 2 positions are modified to phosphoserine: S79 and S150. Residues 100–493 (FDKILALMKK…VSNTSPICVS (394 aa)) are regulatory region. The residue at position 365 (S365) is a Phosphoserine; by MAPK4. The tract at residues 426–455 (EIVRRPSSSSSSENGCDEEEAEDDKVEKEE) is disordered. The segment covering 440-449 (GCDEEEAEDD) has biased composition (acidic residues). One can recognise a Protein kinase domain in the interval 501–755 (WQKGQLLRQG…ATELLNHPFV (255 aa)). Residues 507–515 (LRQGSFGSV) and K529 contribute to the ATP site. The active-site Proton acceptor is the D624. Phosphoserine is present on S768.

This sequence belongs to the protein kinase superfamily. STE Ser/Thr protein kinase family. MAP kinase kinase kinase subfamily. Interacts with MPK4. In terms of processing, phosphorylated by MPK4 upon treatment with flg22. Expressed at least in rosette leaves (at protein level).

The enzyme catalyses L-seryl-[protein] + ATP = O-phospho-L-seryl-[protein] + ADP + H(+). It catalyses the reaction L-threonyl-[protein] + ATP = O-phospho-L-threonyl-[protein] + ADP + H(+). In terms of biological role, triggers SUMM2-mediated immune responses, including cell death and defense responses. Probably inhibited by the MEKK1-MKK1/ MKK2-MPK4 kinase cascade to adjust plant defense. Seems to contribute in transducing external glutamate (L-Glu) signal that elicits large-scale changes in root architecture. The polypeptide is Mitogen-activated protein kinase kinase kinase 9 (Arabidopsis thaliana (Mouse-ear cress)).